The following is a 335-amino-acid chain: Probable cytosolic iron-sulfur protein assembly protein Ciao1 (335 aa).

WD repeat units follow at residues 12-51 (GHKGRIWGVAWHPKGNVFASCGEDKAIRIWSLTGNTWGTK), 57-96 (GHKRTIREIRWSPCGQYLASASFDATTAIWSKSSGEFECN), 101-140 (GHENEVKSVSWSRSGGLLATCSRDKSVWIWEVAGDDEFEC), 146-185 (PHTQDVKRVVWHPTKDVLASASYDNTIKMFAEEPIDNDWD), 192-231 (SHTSTVWGIDFDADGERLVSCSDDTTIKIWRAYHPGNTAG), 250-289 (QHSRAIYDVSWCKLTGLIATACGDDGIRIFKETSDSKPDE), and 301-335 (AHDQDVNSVQWNPVVAGQLISCSDDGTIKIWKVSE).

It belongs to the WD repeat CIA1 family.

Functionally, essential component of the cytosolic iron-sulfur (Fe/S) protein assembly machinery. Required for the maturation of extramitochondrial Fe/S proteins. The polypeptide is Probable cytosolic iron-sulfur protein assembly protein Ciao1 (Drosophila sechellia (Fruit fly)).